Here is a 142-residue protein sequence, read N- to C-terminus: Large ribosomal subunit protein uL13 (142 aa).

The protein belongs to the universal ribosomal protein uL13 family. Part of the 50S ribosomal subunit.

In terms of biological role, this protein is one of the early assembly proteins of the 50S ribosomal subunit, although it is not seen to bind rRNA by itself. It is important during the early stages of 50S assembly. The sequence is that of Large ribosomal subunit protein uL13 from Cellvibrio japonicus (strain Ueda107) (Pseudomonas fluorescens subsp. cellulosa).